A 698-amino-acid polypeptide reads, in one-letter code: Effector protein AvrPphDPgy (698 aa).

Polar residues predominate over residues 1–15 (MNPLRSIQHNITTPP). Disordered stretches follow at residues 1–36 (MNPLRSIQHNITTPPISGGQPLDAVGPQAQQSHPKR) and 171–200 (VDSSSPLLSSPDHSRPPSQHIGSVRRDSDS). A compositionally biased stretch (low complexity) spans 172–181 (DSSSPLLSSP).

Its subcellular location is the secreted. Its function is as follows. Effector protein involved in non-host recognition. The chain is Effector protein AvrPphDPgy (avrPphDPgy) from Pseudomonas savastanoi pv. glycinea (Pseudomonas syringae pv. glycinea).